Reading from the N-terminus, the 356-residue chain is Peptide chain release factor 1 (356 aa).

Residue Gln232 is modified to N5-methylglutamine. The segment at 281-301 is disordered; the sequence is ERQSSELSADRKAQVGSGDRS.

The protein belongs to the prokaryotic/mitochondrial release factor family. Methylated by PrmC. Methylation increases the termination efficiency of RF1.

Its subcellular location is the cytoplasm. Functionally, peptide chain release factor 1 directs the termination of translation in response to the peptide chain termination codons UAG and UAA. The chain is Peptide chain release factor 1 from Desulfovibrio desulfuricans (strain ATCC 27774 / DSM 6949 / MB).